The following is a 461-amino-acid chain: Homogentisate 1,2-dioxygenase (461 aa).

3 residues coordinate Fe cation: histidine 341, glutamate 347, and histidine 377.

This sequence belongs to the homogentisate dioxygenase family. Fe cation serves as cofactor.

It catalyses the reaction homogentisate + O2 = 4-maleylacetoacetate + H(+). The protein operates within amino-acid degradation; L-phenylalanine degradation; acetoacetate and fumarate from L-phenylalanine: step 4/6. This Arabidopsis thaliana (Mouse-ear cress) protein is Homogentisate 1,2-dioxygenase (HGO).